Consider the following 239-residue polypeptide: MEYQRAIDSIEECLNKQLRLSSEKVDQYVLIENWTSLVGHLKTLHSLISNYTNGRELQNEISSLLKQDKELDLQIQDCMREMTSIYDTHLPKTVSGRKRQKVNAETLLDYGRKLSKFSSAPPGYNPETGQDAKAPVHYPWPSEDQMRKTLLFQFSTSMVPNLSATASQLFSEQPPKTNEPTETETEIDANKAVEEKTKMNYPASPTFTTQEENKEVESPANKDVFAGFDLFDPEMEEDF.

Residues 168-221 (QLFSEQPPKTNEPTETETEIDANKAVEEKTKMNYPASPTFTTQEENKEVESPAN) form a disordered region. Residues 188 to 198 (DANKAVEEKTK) show a composition bias toward basic and acidic residues. Ser-204 and Ser-218 each carry phosphoserine.

Belongs to the Mediator complex subunit 4 family. Component of the Mediator complex.

It localises to the nucleus. Functionally, component of the Mediator complex, a coactivator involved in the regulated transcription of nearly all RNA polymerase II-dependent genes. Mediator functions as a bridge to convey information from gene-specific regulatory proteins to the basal RNA polymerase II transcription machinery. Mediator is recruited to promoters by direct interactions with regulatory proteins and serves as a scaffold for the assembly of a functional preinitiation complex with RNA polymerase II and the general transcription factors. This is Mediator of RNA polymerase II transcription subunit 4 (med4) from Schizosaccharomyces pombe (strain 972 / ATCC 24843) (Fission yeast).